The primary structure comprises 324 residues: Delta-aminolevulinic acid dehydratase (324 aa).

Zn(2+) is bound by residues cysteine 120, cysteine 122, and cysteine 130. Lysine 195 functions as the Schiff-base intermediate with substrate in the catalytic mechanism. Positions 205 and 217 each coordinate 5-aminolevulinate. Position 233 (glutamate 233) interacts with Mg(2+). Lysine 248 (schiff-base intermediate with substrate) is an active-site residue. Residues serine 274 and tyrosine 313 each coordinate 5-aminolevulinate.

Belongs to the ALAD family. Homooctamer. Zn(2+) serves as cofactor.

It carries out the reaction 2 5-aminolevulinate = porphobilinogen + 2 H2O + H(+). It participates in porphyrin-containing compound metabolism; protoporphyrin-IX biosynthesis; coproporphyrinogen-III from 5-aminolevulinate: step 1/4. In terms of biological role, catalyzes an early step in the biosynthesis of tetrapyrroles. Binds two molecules of 5-aminolevulinate per subunit, each at a distinct site, and catalyzes their condensation to form porphobilinogen. The polypeptide is Delta-aminolevulinic acid dehydratase (hemB) (Bacillus subtilis (strain 168)).